Reading from the N-terminus, the 921-residue chain is Protein translocase subunit SecA (921 aa).

ATP-binding positions include glutamine 87, 105–109 (GEGKT), and aspartate 501. The interval 831 to 886 (PFPVINTETSGPSEEPAGLFSQGTTGGDIPAPQPMAGFPSAAPMPPRPQPVPTGAE) is disordered. Pro residues predominate over residues 872–881 (APMPPRPQPV). Residues cysteine 905, cysteine 907, cysteine 916, and histidine 917 each coordinate Zn(2+).

Belongs to the SecA family. In terms of assembly, monomer and homodimer. Part of the essential Sec protein translocation apparatus which comprises SecA, SecYEG and auxiliary proteins SecDF-YajC and YidC. It depends on Zn(2+) as a cofactor.

Its subcellular location is the cell inner membrane. It is found in the cytoplasm. It catalyses the reaction ATP + H2O + cellular proteinSide 1 = ADP + phosphate + cellular proteinSide 2.. In terms of biological role, part of the Sec protein translocase complex. Interacts with the SecYEG preprotein conducting channel. Has a central role in coupling the hydrolysis of ATP to the transfer of proteins into and across the cell membrane, serving both as a receptor for the preprotein-SecB complex and as an ATP-driven molecular motor driving the stepwise translocation of polypeptide chains across the membrane. The protein is Protein translocase subunit SecA of Gluconobacter oxydans (strain 621H) (Gluconobacter suboxydans).